An 821-amino-acid chain; its full sequence is Dapper homolog 1 (821 aa).

Residues 88-136 are a coiled coil; the sequence is LNTEEKLLEENILLLRKQLNCLRRRDAGLINQLQELDRQISDLRLDTET. Disordered stretches follow at residues 288–312, 386–432, 564–615, and 627–655; these read SKPG…SSWH, QDAS…STTN, NSAS…KTKR, and ERHT…VLAK. Positions 388-400 are enriched in low complexity; that stretch reads ASATSTEPSTASP. Positions 401–432 are enriched in polar residues; the sequence is QRQWSAESKGGTPQNGAYLSSSQPQNSYSTTN. Basic residues-rich tracts occupy residues 584–593, 601–615, and 639–649; these read DKHRTGSRRT, HLHK…KTKR, and AQRHHGHHRHH. The short motif at 818 to 821 is the PDZ-binding element; it reads MTTV.

Belongs to the dapper family. In terms of assembly, interacts with dvl2.

It localises to the cytoplasm. In terms of biological role, involved in regulation of intracellular signaling pathways during development. Specifically thought to play a role in canonical and/or non-canonical Wnt signaling pathways through interaction with DSH (Dishevelled) family proteins. Binds to dvl2 and may regulate the degradation of ctnnb1/beta-catenin, thereby modulating the transcriptional activation of target genes of the Wnt signaling pathway. Seems to activate the canonical Wnt signaling pathway. In Danio rerio (Zebrafish), this protein is Dapper homolog 1 (dact1).